The following is a 96-amino-acid chain: Large ribosomal subunit protein eL43 (96 aa).

The segment at 41–62 (CPVCAFPKLKRAGTSIWVCDKC) adopts a C4-type zinc-finger fold.

Belongs to the eukaryotic ribosomal protein eL43 family. Zn(2+) serves as cofactor.

The chain is Large ribosomal subunit protein eL43 from Methanococcus vannielii (strain ATCC 35089 / DSM 1224 / JCM 13029 / OCM 148 / SB).